The primary structure comprises 330 residues: Small ribosomal subunit protein uS2 (330 aa).

Belongs to the universal ribosomal protein uS2 family.

The protein is Small ribosomal subunit protein uS2 of Bradyrhizobium sp. (strain BTAi1 / ATCC BAA-1182).